A 574-amino-acid polypeptide reads, in one-letter code: Glycine--tRNA ligase (574 aa).

Substrate is bound by residues Arg96 and Glu162. ATP is bound by residues 194–196 (RNE), 204–209 (IRLREF), 327–328 (EC), and 450–453 (GIDR). 209 to 213 (FTQAE) contributes to the substrate binding site. A substrate-binding site is contributed by 446 to 450 (EPSYG).

The protein belongs to the class-II aminoacyl-tRNA synthetase family.

It is found in the cytoplasm. The catalysed reaction is tRNA(Gly) + glycine + ATP = glycyl-tRNA(Gly) + AMP + diphosphate. In terms of biological role, catalyzes the attachment of glycine to tRNA(Gly). The polypeptide is Glycine--tRNA ligase (Methanococcus maripaludis (strain C7 / ATCC BAA-1331)).